We begin with the raw amino-acid sequence, 249 residues long: 23S rRNA (guanosine-2'-O-)-methyltransferase RlmB (249 aa).

S-adenosyl-L-methionine is bound by residues glycine 200, isoleucine 220, and leucine 229.

The protein belongs to the class IV-like SAM-binding methyltransferase superfamily. RNA methyltransferase TrmH family. RlmB subfamily.

It localises to the cytoplasm. The catalysed reaction is guanosine(2251) in 23S rRNA + S-adenosyl-L-methionine = 2'-O-methylguanosine(2251) in 23S rRNA + S-adenosyl-L-homocysteine + H(+). Specifically methylates the ribose of guanosine 2251 in 23S rRNA. The polypeptide is 23S rRNA (guanosine-2'-O-)-methyltransferase RlmB (Xylella fastidiosa (strain Temecula1 / ATCC 700964)).